The primary structure comprises 294 residues: Octopine-binding periplasmic protein (294 aa).

An N-terminal signal peptide occupies residues 1–20; it reads MRLKSIMCAALFVVAGQAAA. Cysteines 57 and 64 form a disulfide.

This sequence belongs to the bacterial solute-binding protein 3 family.

The protein resides in the periplasm. Functionally, component of the octopine active transport system probably consisting of four subunits: Q, M, P and T. The chain is Octopine-binding periplasmic protein (occT) from Rhizobium meliloti (Ensifer meliloti).